We begin with the raw amino-acid sequence, 166 residues long: Endoribonuclease YbeY (166 aa).

Zn(2+)-binding residues include histidine 111, histidine 115, and histidine 121. A disordered region spans residues 141–166 (LGYPDPYADDESADHPHSDTPSKDHE). Residues 153–166 (ADHPHSDTPSKDHE) are compositionally biased toward basic and acidic residues.

It belongs to the endoribonuclease YbeY family. Zn(2+) is required as a cofactor.

The protein resides in the cytoplasm. Functionally, single strand-specific metallo-endoribonuclease involved in late-stage 70S ribosome quality control and in maturation of the 3' terminus of the 16S rRNA. In Pseudomonas syringae pv. tomato (strain ATCC BAA-871 / DC3000), this protein is Endoribonuclease YbeY.